The sequence spans 94 residues: Pyrimidine/purine nucleoside phosphorylase (94 aa).

This sequence belongs to the nucleoside phosphorylase PpnP family.

The catalysed reaction is a purine D-ribonucleoside + phosphate = a purine nucleobase + alpha-D-ribose 1-phosphate. It carries out the reaction adenosine + phosphate = alpha-D-ribose 1-phosphate + adenine. It catalyses the reaction cytidine + phosphate = cytosine + alpha-D-ribose 1-phosphate. The enzyme catalyses guanosine + phosphate = alpha-D-ribose 1-phosphate + guanine. The catalysed reaction is inosine + phosphate = alpha-D-ribose 1-phosphate + hypoxanthine. It carries out the reaction thymidine + phosphate = 2-deoxy-alpha-D-ribose 1-phosphate + thymine. It catalyses the reaction uridine + phosphate = alpha-D-ribose 1-phosphate + uracil. The enzyme catalyses xanthosine + phosphate = alpha-D-ribose 1-phosphate + xanthine. In terms of biological role, catalyzes the phosphorolysis of diverse nucleosides, yielding D-ribose 1-phosphate and the respective free bases. Can use uridine, adenosine, guanosine, cytidine, thymidine, inosine and xanthosine as substrates. Also catalyzes the reverse reactions. The polypeptide is Pyrimidine/purine nucleoside phosphorylase (Salmonella heidelberg (strain SL476)).